A 550-amino-acid chain; its full sequence is Hydroxylamine reductase (550 aa).

C3, C6, C18, and C25 together coordinate [2Fe-2S] cluster. Hybrid [4Fe-2O-2S] cluster is bound by residues H249, E273, C317, C405, C433, C458, E492, and K494. Position 405 is a cysteine persulfide (C405).

It belongs to the HCP family. Requires [2Fe-2S] cluster as cofactor. It depends on hybrid [4Fe-2O-2S] cluster as a cofactor.

The protein resides in the cytoplasm. The enzyme catalyses A + NH4(+) + H2O = hydroxylamine + AH2 + H(+). Its function is as follows. Catalyzes the reduction of hydroxylamine to form NH(3) and H(2)O. This Salmonella choleraesuis (strain SC-B67) protein is Hydroxylamine reductase.